Consider the following 517-residue polypeptide: Crotonobetaine/carnitine--CoA ligase (517 aa).

Belongs to the ATP-dependent AMP-binding enzyme family.

The enzyme catalyses 4-(trimethylamino)butanoate + ATP + CoA = 4-(trimethylamino)butanoyl-CoA + AMP + diphosphate. The catalysed reaction is crotonobetaine + ATP + CoA = crotonobetainyl-CoA + AMP + diphosphate. It carries out the reaction (R)-carnitine + ATP + CoA = (R)-carnitinyl-CoA + AMP + diphosphate. Its pathway is amine and polyamine metabolism; carnitine metabolism. Functionally, catalyzes the transfer of CoA to carnitine, generating the initial carnitinyl-CoA needed for the CaiB reaction cycle. Also has activity toward crotonobetaine and gamma-butyrobetaine. This chain is Crotonobetaine/carnitine--CoA ligase, found in Citrobacter koseri (strain ATCC BAA-895 / CDC 4225-83 / SGSC4696).